We begin with the raw amino-acid sequence, 471 residues long: MTMAANLLEDWCRGMEADIHRSLLVTGIPEDCGQAEIEETLNGVLSPLGPYSVLNKIFLRQENAKAALVEVGEGVNLRAIPREFPGRGGIWRVVCRDPTQDAEFLKNLNEFLDAEERTLEDVVHLLELSRASPPKTQNRSTENWAEALGVLLGAVVQIIYYMDAEMLSQEEARAQDLAKAQAVASLASAAGRKVKKEPGRAAERGSALKMENPDGWNDVADGGDGPKPLVRKAGALTHSRRKRQKKTPKQEPVPWKKSQGSHSHSSASLKHPEADDGKNRERLEHVRNNKKPCVKQEGSALKKAPVKCAWKFPSNLPHVAASRGVASESDQDGGLEGPPKKKAMGWVSAKSPAYMRKKKVSLGPVSYVLVNSEDPRKKPGVSKKGPGSGQDAPDQKAPGVPQAHESPTSASQGPEAKPQSPLHASSGENDGRSHLGCVNKWMEGEEQQGKAGAQEPKWAESQMVGEDPSAV.

2 disordered regions span residues Ser188–Ala300 and Ala321–Val471. The span at His238 to Thr247 shows a compositional bias: basic residues. The segment covering Lys256 to Leu269 has biased composition (low complexity). Over residues Lys270–Arg287 the composition is skewed to basic and acidic residues.

This sequence belongs to the PNMA family.

This is Paraneoplastic antigen-like protein 8A (PNMA8A) from Bos taurus (Bovine).